Here is a 191-residue protein sequence, read N- to C-terminus: Molybdenum cofactor guanylyltransferase (191 aa).

GTP-binding positions include 13-15 (LAG), Lys26, Asp72, and Asp102. Asp102 is a binding site for Mg(2+).

Belongs to the MobA family. As to quaternary structure, monomer. It depends on Mg(2+) as a cofactor.

Its subcellular location is the cytoplasm. The enzyme catalyses Mo-molybdopterin + GTP + H(+) = Mo-molybdopterin guanine dinucleotide + diphosphate. Its function is as follows. Transfers a GMP moiety from GTP to Mo-molybdopterin (Mo-MPT) cofactor (Moco or molybdenum cofactor) to form Mo-molybdopterin guanine dinucleotide (Mo-MGD) cofactor. This Pseudomonas entomophila (strain L48) protein is Molybdenum cofactor guanylyltransferase.